Consider the following 160-residue polypeptide: MKSKFIVPVLKPESYLRKILSTPQGILYIGKYPIKDLEAHILVGDIVSNTLRGNIKIIDYKTRRHINIKPIINEPLTNLVNPRGTMSLMSRTIAKAKNYRTIIVKGEEDLVTLAYALENEETSIAYGQPDIGVVIIKSNRLKALRILKTFKPDIVVYNKV.

Aspartate 45, isoleucine 46, valine 47, aspartate 59, lysine 61, glutamate 108, and aspartate 130 together coordinate GTP.

It belongs to the GTP-dependent DPCK family.

It carries out the reaction 3'-dephospho-CoA + GTP = GDP + CoA + H(+). It participates in cofactor biosynthesis; coenzyme A biosynthesis. Catalyzes the GTP-dependent phosphorylation of the 3'-hydroxyl group of dephosphocoenzyme A to form coenzyme A (CoA). This Staphylothermus marinus (strain ATCC 43588 / DSM 3639 / JCM 9404 / F1) protein is GTP-dependent dephospho-CoA kinase.